Reading from the N-terminus, the 338-residue chain is Glycerol-3-phosphate dehydrogenase [NAD(P)+] (338 aa).

The NADPH site is built by serine 13, tryptophan 14, and lysine 108. Positions 108, 139, and 141 each coordinate sn-glycerol 3-phosphate. Position 143 (alanine 143) interacts with NADPH. 5 residues coordinate sn-glycerol 3-phosphate: lysine 194, aspartate 247, serine 257, arginine 258, and asparagine 259. The active-site Proton acceptor is the lysine 194. Arginine 258 is a binding site for NADPH. NADPH-binding residues include valine 282 and glutamate 284.

It belongs to the NAD-dependent glycerol-3-phosphate dehydrogenase family.

It localises to the cytoplasm. The enzyme catalyses sn-glycerol 3-phosphate + NAD(+) = dihydroxyacetone phosphate + NADH + H(+). It carries out the reaction sn-glycerol 3-phosphate + NADP(+) = dihydroxyacetone phosphate + NADPH + H(+). Its pathway is membrane lipid metabolism; glycerophospholipid metabolism. In terms of biological role, catalyzes the reduction of the glycolytic intermediate dihydroxyacetone phosphate (DHAP) to sn-glycerol 3-phosphate (G3P), the key precursor for phospholipid synthesis. In Streptococcus uberis (strain ATCC BAA-854 / 0140J), this protein is Glycerol-3-phosphate dehydrogenase [NAD(P)+].